The primary structure comprises 436 residues: 4-hydroxyphenylpyruvate dioxygenase (436 aa).

VOC domains follow at residues 38-194 (RFHH…GFEV) and 210-370 (RLDH…IFTK). Residues His213, His295, and Glu381 each coordinate Fe cation.

The protein belongs to the 4HPPD family. The cofactor is Fe cation.

It is found in the cytoplasm. It catalyses the reaction 3-(4-hydroxyphenyl)pyruvate + O2 = homogentisate + CO2. It functions in the pathway amino-acid degradation; L-phenylalanine degradation; acetoacetate and fumarate from L-phenylalanine: step 3/6. Its pathway is cofactor biosynthesis; prenylquinone biosynthesis. The sequence is that of 4-hydroxyphenylpyruvate dioxygenase from Plectranthus scutellarioides (Coleus).